Reading from the N-terminus, the 1406-residue chain is Protein FAM135B (1406 aa).

2 disordered regions span residues 519–548 (WTGQTSDAGTYPVADVDTSRRSPGPEDGQA) and 770–820 (SVSA…GDSG). 2 positions are modified to phosphoserine: Ser-777 and Ser-778. The segment covering 804–816 (KSQGSPGSCSQLC) has biased composition (polar residues).

This sequence belongs to the FAM135 family.

This chain is Protein FAM135B (FAM135B), found in Homo sapiens (Human).